Consider the following 448-residue polypeptide: Phosphoglucosamine mutase (448 aa).

The active-site Phosphoserine intermediate is the S104. Mg(2+)-binding residues include S104, D245, D247, and D249. A Phosphoserine modification is found at S104.

Belongs to the phosphohexose mutase family. Requires Mg(2+) as cofactor. Post-translationally, activated by phosphorylation.

It carries out the reaction alpha-D-glucosamine 1-phosphate = D-glucosamine 6-phosphate. Functionally, catalyzes the conversion of glucosamine-6-phosphate to glucosamine-1-phosphate. This Caulobacter vibrioides (strain ATCC 19089 / CIP 103742 / CB 15) (Caulobacter crescentus) protein is Phosphoglucosamine mutase.